A 567-amino-acid polypeptide reads, in one-letter code: Probable serine/threonine-protein kinase WNK6 (567 aa).

Residues 28–285 (IRYKEVIGKG…AKELLLDPFL (258 aa)) form the Protein kinase domain. Residues 108–111 (TELF) and Lys-158 contribute to the ATP site. The Proton acceptor role is filled by Asp-175. The segment covering 499–509 (VDATKGEDKSS) has biased composition (basic and acidic residues). The disordered stretch occupies residues 499–528 (VDATKGEDKSSIQEVEEATEPVSLEEEERL). The segment covering 512-525 (EVEEATEPVSLEEE) has biased composition (acidic residues). A coiled-coil region spans residues 519-553 (PVSLEEEERLRQELEEIEAKYQEDMKEIATKREEA).

This sequence belongs to the protein kinase superfamily. Ser/Thr protein kinase family. WNK subfamily.

It carries out the reaction L-seryl-[protein] + ATP = O-phospho-L-seryl-[protein] + ADP + H(+). The enzyme catalyses L-threonyl-[protein] + ATP = O-phospho-L-threonyl-[protein] + ADP + H(+). May regulate flowering time by modulating the photoperiod pathway. The polypeptide is Probable serine/threonine-protein kinase WNK6 (WNK6) (Arabidopsis thaliana (Mouse-ear cress)).